The chain runs to 1035 residues: Sialidase A (1035 aa).

An N-terminal signal peptide occupies residues 1–53 (MSYFRNRDIDIERNSMNRSVQERKCRYSIRKLSVGAVSMIVGAVVFGTSPVLA). Residues 57 to 112 (ASEQPLANETQLSGESSTLTDTEKSQPSSETELSGNKQEQERKDKQEEKIPRDYYA) form a disordered region. Residues 61–92 (PLANETQLSGESSTLTDTEKSQPSSETELSGN) show a composition bias toward polar residues. A compositionally biased stretch (basic and acidic residues) spans 94–112 (QEQERKDKQEEKIPRDYYA). R347 serves as a coordination point for substrate. Catalysis depends on D372, which acts as the Proton acceptor. 3 BNR repeats span residues 381 to 392 (RRSEDNGKTWGD), 539 to 550 (SYSDDDGKTWSA), and 607 to 618 (IYSDDHGKTWHA). The active site involves E647. R663 is a substrate binding site. A BNR 4 repeat occupies 672 to 683 (ATSKDGGVTWEK). The segment at 902–951 (GPLGTSGEEPAPTVEKPEYTGPLGTSGEEPAPTVEKPEYTGPLGTAGEEA) is disordered. The short motif at 1003-1007 (LPETG) is the LPXTG sorting signal element. T1006 carries the pentaglycyl murein peptidoglycan amidated threonine modification. Residues 1007-1035 (GNKESDLLASLGLTAFFLGLFTLGKKREQ) constitute a propeptide, removed by sortase.

It belongs to the glycosyl hydrolase 33 family.

Its subcellular location is the secreted. It is found in the cell wall. It catalyses the reaction Hydrolysis of alpha-(2-&gt;3)-, alpha-(2-&gt;6)-, alpha-(2-&gt;8)- glycosidic linkages of terminal sialic acid residues in oligosaccharides, glycoproteins, glycolipids, colominic acid and synthetic substrates.. The protein is Sialidase A (nanA) of Streptococcus pneumoniae.